Reading from the N-terminus, the 523-residue chain is Glutamate--cysteine ligase (523 aa).

Belongs to the glutamate--cysteine ligase type 1 family. Type 1 subfamily.

The catalysed reaction is L-cysteine + L-glutamate + ATP = gamma-L-glutamyl-L-cysteine + ADP + phosphate + H(+). Its pathway is sulfur metabolism; glutathione biosynthesis; glutathione from L-cysteine and L-glutamate: step 1/2. The protein is Glutamate--cysteine ligase of Baumannia cicadellinicola subsp. Homalodisca coagulata.